The sequence spans 277 residues: Leucine-rich repeat-containing protein 10 (277 aa).

LRR repeat units lie at residues 53 to 74, 76 to 97, 99 to 120, 122 to 143, 145 to 167, 168 to 189, and 191 to 212; these read ELVK…LGQL, NLQI…VCTL, QLCI…LSLL, NLRT…VCEL, LLKT…RRLQ, ELRT…LLHM, and FLEV…AHLS.

The protein resides in the nucleus. Functionally, may play important roles in cardiac development and/or cardiac function. In Homo sapiens (Human), this protein is Leucine-rich repeat-containing protein 10 (LRRC10).